The following is a 115-amino-acid chain: Histone H2A-Bbd type 2/3 (115 aa).

The disordered stretch occupies residues 1–21 (MPRRRRRRGSSGAGGRGRTCS). Residues 87 to 115 (LLDMVVHNDRLLSTLFNTTTISQVAPGED) form a docking domain region.

The protein belongs to the histone H2A family. As to quaternary structure, the nucleosome is a histone octamer containing two molecules each of H2A, H2B, H3 and H4 assembled in one H3-H4 heterotetramer and two H2A-H2B heterodimers. May be incorporated into a proportion of nucleosomes, replacing one or more H2A molecules. In terms of tissue distribution, present in mature sperm.

Its subcellular location is the nucleus. The protein resides in the chromosome. Functionally, atypical histone H2A which can replace conventional H2A in some nucleosomes and is associated with active transcription and mRNA processing. Nucleosomes wrap and compact DNA into chromatin, limiting DNA accessibility to the cellular machineries which require DNA as a template. Histones thereby play a central role in transcription regulation, DNA repair, DNA replication and chromosomal stability. Nucleosomes containing this histone are less rigid and organize less DNA than canonical nucleosomes in vivo. They are enriched in actively transcribed genes and associate with the elongating form of RNA polymerase. They associate with spliceosome components and are required for mRNA splicing. May participate in spermatogenesis. The chain is Histone H2A-Bbd type 2/3 from Homo sapiens (Human).